The following is a 444-amino-acid chain: Tubulin beta chain (444 aa).

Residues Gln11, Glu69, Ser138, Gly142, Thr143, Gly144, Asn204, and Asn226 each coordinate GTP. Position 69 (Glu69) interacts with Mg(2+).

Belongs to the tubulin family. Dimer of alpha and beta chains. A typical microtubule is a hollow water-filled tube with an outer diameter of 25 nm and an inner diameter of 15 nM. Alpha-beta heterodimers associate head-to-tail to form protofilaments running lengthwise along the microtubule wall with the beta-tubulin subunit facing the microtubule plus end conferring a structural polarity. Microtubules usually have 13 protofilaments but different protofilament numbers can be found in some organisms and specialized cells. Mg(2+) is required as a cofactor.

It is found in the cytoplasm. The protein localises to the cytoskeleton. Tubulin is the major constituent of microtubules, a cylinder consisting of laterally associated linear protofilaments composed of alpha- and beta-tubulin heterodimers. Microtubules grow by the addition of GTP-tubulin dimers to the microtubule end, where a stabilizing cap forms. Below the cap, tubulin dimers are in GDP-bound state, owing to GTPase activity of alpha-tubulin. The polypeptide is Tubulin beta chain (Phytophthora cinnamomi (Cinnamon fungus)).